A 92-amino-acid polypeptide reads, in one-letter code: Muscle LIM protein 1 (92 aa).

Residues 11 to 62 (CPACGKSVYAAEERVAGGYKFHKTCFKCSMCNKALDSTNCTEHEKELFCKNC) enclose the LIM zinc-binding domain. Positions 65–70 (RKYGPK) match the Nuclear localization signal motif.

In terms of tissue distribution, in the embryo, expression is restricted to the somatic, visceral, and pharyngeal muscles. Within the somatic musculature, MLP60 is distributed throughout the muscle fibers. There is no expression in cardiac mesoderm or in fat body.

It localises to the cytoplasm. It is found in the nucleus. In terms of biological role, positive regulator of myogenesis. This is Muscle LIM protein 1 (Mlp60A) from Drosophila melanogaster (Fruit fly).